We begin with the raw amino-acid sequence, 230 residues long: Ribonuclease HII (230 aa).

The region spanning 21–212 (GPVAGVDEVG…VRRVANGSGG (192 aa)) is the RNase H type-2 domain. Residues Asp27, Glu28, and Asp121 each contribute to the a divalent metal cation site.

It belongs to the RNase HII family. Mn(2+) serves as cofactor. Mg(2+) is required as a cofactor.

The protein localises to the cytoplasm. The enzyme catalyses Endonucleolytic cleavage to 5'-phosphomonoester.. Its function is as follows. Endonuclease that specifically degrades the RNA of RNA-DNA hybrids. This is Ribonuclease HII from Mycobacterium avium (strain 104).